We begin with the raw amino-acid sequence, 550 residues long: Arginine--tRNA ligase (550 aa).

The short motif at 123–133 (ANPTGYLHIAH) is the 'HIGH' region element.

It belongs to the class-I aminoacyl-tRNA synthetase family. As to quaternary structure, monomer.

The protein resides in the cytoplasm. The enzyme catalyses tRNA(Arg) + L-arginine + ATP = L-arginyl-tRNA(Arg) + AMP + diphosphate. In Ureaplasma parvum serovar 3 (strain ATCC 27815 / 27 / NCTC 11736), this protein is Arginine--tRNA ligase.